A 443-amino-acid chain; its full sequence is Thymidine phosphorylase (443 aa).

Belongs to the thymidine/pyrimidine-nucleoside phosphorylase family. Homodimer.

It carries out the reaction thymidine + phosphate = 2-deoxy-alpha-D-ribose 1-phosphate + thymine. It functions in the pathway pyrimidine metabolism; dTMP biosynthesis via salvage pathway; dTMP from thymine: step 1/2. Its function is as follows. The enzymes which catalyze the reversible phosphorolysis of pyrimidine nucleosides are involved in the degradation of these compounds and in their utilization as carbon and energy sources, or in the rescue of pyrimidine bases for nucleotide synthesis. This chain is Thymidine phosphorylase, found in Shewanella sp. (strain MR-7).